Here is a 163-residue protein sequence, read N- to C-terminus: ATP synthase subunit b (163 aa).

A helical transmembrane segment spans residues 1–21 (MISFNLTSIVNLVGFLAFMFL).

This sequence belongs to the ATPase B chain family. As to quaternary structure, F-type ATPases have 2 components, F(1) - the catalytic core - and F(0) - the membrane proton channel. F(1) has five subunits: alpha(3), beta(3), gamma(1), delta(1), epsilon(1). F(0) has three main subunits: a(1), b(2) and c(10-14). The alpha and beta chains form an alternating ring which encloses part of the gamma chain. F(1) is attached to F(0) by a central stalk formed by the gamma and epsilon chains, while a peripheral stalk is formed by the delta and b chains.

Its subcellular location is the cell inner membrane. In terms of biological role, f(1)F(0) ATP synthase produces ATP from ADP in the presence of a proton or sodium gradient. F-type ATPases consist of two structural domains, F(1) containing the extramembraneous catalytic core and F(0) containing the membrane proton channel, linked together by a central stalk and a peripheral stalk. During catalysis, ATP synthesis in the catalytic domain of F(1) is coupled via a rotary mechanism of the central stalk subunits to proton translocation. Its function is as follows. Component of the F(0) channel, it forms part of the peripheral stalk, linking F(1) to F(0). This is ATP synthase subunit b from Petrotoga mobilis (strain DSM 10674 / SJ95).